Consider the following 337-residue polypeptide: Protein ABHD13 (337 aa).

The chain crosses the membrane as a helical; Signal-anchor for type II membrane protein span at residues 37–57; the sequence is FHLYGGIILLLLIFISIAGIL. Active-site charge relay system residues include S193, D268, and H298. A glycan (N-linked (GlcNAc...) asparagine) is linked at N299.

Belongs to the serine esterase family.

The protein localises to the membrane. This Homo sapiens (Human) protein is Protein ABHD13.